Reading from the N-terminus, the 436-residue chain is Trigger factor (436 aa).

A PPIase FKBP-type domain is found at 163–248; it reads GDTVVIDFDG…IHEVKEKQLP (86 aa).

Belongs to the FKBP-type PPIase family. Tig subfamily.

Its subcellular location is the cytoplasm. The enzyme catalyses [protein]-peptidylproline (omega=180) = [protein]-peptidylproline (omega=0). Its function is as follows. Involved in protein export. Acts as a chaperone by maintaining the newly synthesized protein in an open conformation. Functions as a peptidyl-prolyl cis-trans isomerase. This is Trigger factor from Levilactobacillus brevis (strain ATCC 367 / BCRC 12310 / CIP 105137 / JCM 1170 / LMG 11437 / NCIMB 947 / NCTC 947) (Lactobacillus brevis).